The sequence spans 237 residues: Ribose-5-phosphate isomerase A (237 aa).

Substrate is bound by residues Thr-32–Thr-35, Asp-85–Asp-88, and Lys-99–Gly-102. Glu-108 acts as the Proton acceptor in catalysis. Position 126 (Arg-126) interacts with substrate.

Belongs to the ribose 5-phosphate isomerase family. As to quaternary structure, homodimer.

It carries out the reaction aldehydo-D-ribose 5-phosphate = D-ribulose 5-phosphate. The protein operates within carbohydrate degradation; pentose phosphate pathway; D-ribose 5-phosphate from D-ribulose 5-phosphate (non-oxidative stage): step 1/1. In terms of biological role, catalyzes the reversible conversion of ribose-5-phosphate to ribulose 5-phosphate. This chain is Ribose-5-phosphate isomerase A, found in Aeropyrum pernix (strain ATCC 700893 / DSM 11879 / JCM 9820 / NBRC 100138 / K1).